The primary structure comprises 1314 residues: E3 ubiquitin-protein ligase RNF123 (1314 aa).

Ala2 bears the N-acetylalanine mark. Residues 74 to 254 (VDNEEEESQG…VAFNFGSRPL (181 aa)) form the B30.2/SPRY domain. Phosphoserine is present on Ser675. Residue Arg683 is modified to Asymmetric dimethylarginine. An interaction with NFKB1 region spans residues 968–974 (WILVRLW). Cys1254, Cys1257, Cys1269, His1271, Cys1274, Cys1277, Cys1288, and Cys1291 together coordinate Zn(2+). Residues 1254 to 1292 (CPICYAHPISAVFQPCGHKSCKACINQHLMNNKDCFFCK) form an RING-type zinc finger.

In terms of assembly, component of the KPC complex composed of RNF123/KPC1 and UBAC1/KPC2. Interacts with UBAC1 and CDKN1B via its N-terminal domain. Interacts with RIGI (via N-terminus) and IFIH1 (via N-terminus). Post-translationally, ubiquitinated, leading to its degradation. Deubiquitinated by USP19, thereby stimulating CDKN1B ubiquitin-dependent degradation.

The protein resides in the cytoplasm. The enzyme catalyses S-ubiquitinyl-[E2 ubiquitin-conjugating enzyme]-L-cysteine + [acceptor protein]-L-lysine = [E2 ubiquitin-conjugating enzyme]-L-cysteine + N(6)-ubiquitinyl-[acceptor protein]-L-lysine.. It participates in protein modification; protein ubiquitination. Functionally, catalytic subunit of the KPC complex that acts as E3 ubiquitin-protein ligase. Promotes the ubiquitination and proteasome-mediated degradation of CDKN1B which is the cyclin-dependent kinase inhibitor at the G0-G1 transition of the cell cycle. Also acts as a key regulator of the NF-kappa-B signaling by promoting maturation of the NFKB1 component of NF-kappa-B: acts by catalyzing ubiquitination of the NFKB1 p105 precursor, leading to limited proteasomal degradation of NFKB1 p105 and generation of the active NFKB1 p50 subunit. Also functions as an inhibitor of innate antiviral signaling mediated by RIGI and IFIH1 independently of its E3 ligase activity. Interacts with the N-terminal CARD domains of RIGI and IFIH1 and competes with the downstream adapter MAVS. The sequence is that of E3 ubiquitin-protein ligase RNF123 from Homo sapiens (Human).